A 131-amino-acid polypeptide reads, in one-letter code: QRFP-like peptide (131 aa).

Residues 1 to 25 (MGVRVMRSRICVIGLLVLMLTQSEA) form the signal peptide. The propeptide occupies 26–94 (YSFREKSWRT…DDGISPADKR (69 aa)). The disordered stretch occupies residues 48 to 131 (RRDGGDQAPS…RESRRSFGSD (84 aa)). The span at 97 to 106 (MLQQLAQQLK) shows a compositional bias: polar residues. Residue phenylalanine 119 is modified to Phenylalanine amide. Basic and acidic residues predominate over residues 120-131 (GKRESRRSFGSD). The propeptide occupies 123-131 (ESRRSFGSD).

This sequence belongs to the RFamide neuropeptide family.

It localises to the secreted. In terms of biological role, ligand for the G-protein coupled receptor QRFPR. The sequence is that of QRFP-like peptide from Branchiostoma floridae (Florida lancelet).